A 734-amino-acid chain; its full sequence is Photosystem I P700 chlorophyll a apoprotein A2 (734 aa).

The next 8 helical transmembrane spans lie at 46–69, 135–158, 175–199, 273–291, 330–353, 369–395, 417–439, and 517–535; these read IFASHFGQLAIIFLWTSGNLFHVA, LYTGALFLLFLSAISLIAGWLHLQ, LNHHLSGLFGVSSLAWTGHLVHVAI, MAHHHLAIAFIFLVAGHMY, LHFQLGLALASLGVITSLVAQHMY, AALYTHHQYIAGFIMTGAFAHGAIFFI, AIISHLSWASLFLGFHTLGLYVH, and FLVHHAIALGLHTTTLILV. Residues cysteine 559 and cysteine 568 each coordinate [4Fe-4S] cluster. Transmembrane regions (helical) follow at residues 575–596 and 643–665; these read AFYLAVFWMLNTIGWVTFYWHW and LSVWAWMFLFGHLVWATGFMFLI. The chlorophyll a site is built by histidine 654, methionine 662, and tyrosine 670. Tryptophan 671 serves as a coordination point for phylloquinone. A helical transmembrane segment spans residues 707–727; sequence LVGLAHFSVGYIFTYAAFLIA.

This sequence belongs to the PsaA/PsaB family. As to quaternary structure, the PsaA/B heterodimer binds the P700 chlorophyll special pair and subsequent electron acceptors. PSI consists of a core antenna complex that captures photons, and an electron transfer chain that converts photonic excitation into a charge separation. The eukaryotic PSI reaction center is composed of at least 11 subunits. P700 is a chlorophyll a/chlorophyll a' dimer, A0 is one or more chlorophyll a, A1 is one or both phylloquinones and FX is a shared 4Fe-4S iron-sulfur center. is required as a cofactor.

It localises to the plastid. It is found in the chloroplast thylakoid membrane. It catalyses the reaction reduced [plastocyanin] + hnu + oxidized [2Fe-2S]-[ferredoxin] = oxidized [plastocyanin] + reduced [2Fe-2S]-[ferredoxin]. In terms of biological role, psaA and PsaB bind P700, the primary electron donor of photosystem I (PSI), as well as the electron acceptors A0, A1 and FX. PSI is a plastocyanin-ferredoxin oxidoreductase, converting photonic excitation into a charge separation, which transfers an electron from the donor P700 chlorophyll pair to the spectroscopically characterized acceptors A0, A1, FX, FA and FB in turn. Oxidized P700 is reduced on the lumenal side of the thylakoid membrane by plastocyanin. The protein is Photosystem I P700 chlorophyll a apoprotein A2 of Solanum tuberosum (Potato).